Reading from the N-terminus, the 336-residue chain is Large ribosomal subunit protein uL3 (336 aa).

3 disordered regions span residues 1 to 43 (MPQP…QGFA), 205 to 230 (ITKGKGTQGPVKRWGVQKRKGKHARQ), and 311 to 336 (RPAVRPGDQPRLDPEVRYVSTASNQG). The span at 219–230 (GVQKRKGKHARQ) shows a compositional bias: basic residues.

This sequence belongs to the universal ribosomal protein uL3 family. As to quaternary structure, part of the 50S ribosomal subunit. Forms a cluster with proteins L14 and L24e.

One of the primary rRNA binding proteins, it binds directly near the 3'-end of the 23S rRNA, where it nucleates assembly of the 50S subunit. This Natronomonas pharaonis (strain ATCC 35678 / DSM 2160 / CIP 103997 / JCM 8858 / NBRC 14720 / NCIMB 2260 / Gabara) (Halobacterium pharaonis) protein is Large ribosomal subunit protein uL3.